The sequence spans 304 residues: Undecaprenyl-diphosphatase (304 aa).

Helical transmembrane passes span Met-1–Val-21, Thr-54–Leu-74, Leu-90–Glu-110, Ala-114–Ala-134, Phe-192–Pro-212, Leu-225–Trp-245, and Leu-253–Val-273.

It belongs to the UppP family.

The protein resides in the cell inner membrane. The enzyme catalyses di-trans,octa-cis-undecaprenyl diphosphate + H2O = di-trans,octa-cis-undecaprenyl phosphate + phosphate + H(+). Catalyzes the dephosphorylation of undecaprenyl diphosphate (UPP). Confers resistance to bacitracin. The protein is Undecaprenyl-diphosphatase of Anaeromyxobacter sp. (strain Fw109-5).